Here is a 163-residue protein sequence, read N- to C-terminus: Small ribosomal subunit protein uS7 (163 aa).

Belongs to the universal ribosomal protein uS7 family. In terms of assembly, part of the 30S ribosomal subunit. Contacts proteins S9 and S11.

In terms of biological role, one of the primary rRNA binding proteins, it binds directly to 16S rRNA where it nucleates assembly of the head domain of the 30S subunit. Is located at the subunit interface close to the decoding center, probably blocks exit of the E-site tRNA. This Rickettsia bellii (strain RML369-C) protein is Small ribosomal subunit protein uS7.